A 75-amino-acid polypeptide reads, in one-letter code: Endogenous retrovirus group K member 7 Np9 protein (75 aa).

The segment at 24–43 is disordered; sequence PKRQRPSRTGHDDDGGFVEK. The span at 32–43 shows a compositional bias: basic and acidic residues; it reads TGHDDDGGFVEK.

The protein localises to the nucleus. Functionally, may possess a function in tumorigenesis. This chain is Endogenous retrovirus group K member 7 Np9 protein (ERVK-7), found in Homo sapiens (Human).